Reading from the N-terminus, the 470-residue chain is tRNA-2-methylthio-N(6)-dimethylallyladenosine synthase (470 aa).

The region spanning 20-138 (PRVHIETFGC…LPELVERARS (119 aa)) is the MTTase N-terminal domain. Positions 29, 65, 99, 176, 180, and 183 each coordinate [4Fe-4S] cluster. Residues 162-398 (REGDLKAWVT…MEVQNRIARA (237 aa)) enclose the Radical SAM core domain. Residues 401-464 (EARVGKVYDI…TWTLEGELVE (64 aa)) form the TRAM domain.

Belongs to the methylthiotransferase family. MiaB subfamily. As to quaternary structure, monomer. [4Fe-4S] cluster is required as a cofactor.

The protein localises to the cytoplasm. The enzyme catalyses N(6)-dimethylallyladenosine(37) in tRNA + (sulfur carrier)-SH + AH2 + 2 S-adenosyl-L-methionine = 2-methylsulfanyl-N(6)-dimethylallyladenosine(37) in tRNA + (sulfur carrier)-H + 5'-deoxyadenosine + L-methionine + A + S-adenosyl-L-homocysteine + 2 H(+). Functionally, catalyzes the methylthiolation of N6-(dimethylallyl)adenosine (i(6)A), leading to the formation of 2-methylthio-N6-(dimethylallyl)adenosine (ms(2)i(6)A) at position 37 in tRNAs that read codons beginning with uridine. The sequence is that of tRNA-2-methylthio-N(6)-dimethylallyladenosine synthase from Symbiobacterium thermophilum (strain DSM 24528 / JCM 14929 / IAM 14863 / T).